The following is a 129-amino-acid chain: Small ribosomal subunit protein uS8 (129 aa).

The protein belongs to the universal ribosomal protein uS8 family. In terms of assembly, part of the 30S ribosomal subunit.

Functionally, one of the primary rRNA binding proteins, it binds directly to 16S rRNA central domain where it helps coordinate assembly of the platform of the 30S subunit. This Thermofilum pendens (strain DSM 2475 / Hrk 5) protein is Small ribosomal subunit protein uS8.